The following is a 79-amino-acid chain: D-alanyl carrier protein (79 aa).

Residues methionine 1 to arginine 77 form the Carrier domain. Serine 35 carries the post-translational modification O-(pantetheine 4'-phosphoryl)serine.

It belongs to the DltC family. In terms of processing, 4'-phosphopantetheine is transferred from CoA to a specific serine of apo-DCP.

Its subcellular location is the cytoplasm. The protein operates within cell wall biogenesis; lipoteichoic acid biosynthesis. Functionally, carrier protein involved in the D-alanylation of lipoteichoic acid (LTA). The loading of thioester-linked D-alanine onto DltC is catalyzed by D-alanine--D-alanyl carrier protein ligase DltA. The DltC-carried D-alanyl group is further transferred to cell membrane phosphatidylglycerol (PG) by forming an ester bond, probably catalyzed by DltD. D-alanylation of LTA plays an important role in modulating the properties of the cell wall in Gram-positive bacteria, influencing the net charge of the cell wall. This chain is D-alanyl carrier protein, found in Streptococcus sanguinis (strain SK36).